Consider the following 356-residue polypeptide: Sulfate/thiosulfate import ATP-binding protein CysA (356 aa).

Residues 3-237 enclose the ABC transporter domain; it reads IEVKNLVKRF…PKNSFVFHFL (235 aa). 35–42 provides a ligand contact to ATP; it reads GPSGSGKT.

This sequence belongs to the ABC transporter superfamily. Sulfate/tungstate importer (TC 3.A.1.6) family. In terms of assembly, the complex is composed of two ATP-binding proteins (CysA), two transmembrane proteins (CysT and CysW) and a solute-binding protein (CysP).

It localises to the cell inner membrane. The enzyme catalyses sulfate(out) + ATP + H2O = sulfate(in) + ADP + phosphate + H(+). It catalyses the reaction thiosulfate(out) + ATP + H2O = thiosulfate(in) + ADP + phosphate + H(+). Its function is as follows. Part of the ABC transporter complex CysAWTP involved in sulfate/thiosulfate import. Responsible for energy coupling to the transport system. This Leptospira interrogans serogroup Icterohaemorrhagiae serovar copenhageni (strain Fiocruz L1-130) protein is Sulfate/thiosulfate import ATP-binding protein CysA.